The following is a 440-amino-acid chain: Light-independent protochlorophyllide reductase subunit N (440 aa).

Residues 1–24 (MTCRPALSDSHPPEPGTPSSPSFG) are disordered. Cysteine 42, cysteine 67, and cysteine 128 together coordinate [4Fe-4S] cluster.

This sequence belongs to the BchN/ChlN family. In terms of assembly, protochlorophyllide reductase is composed of three subunits; BchL, BchN and BchB. Forms a heterotetramer of two BchB and two BchN subunits. [4Fe-4S] cluster is required as a cofactor.

It carries out the reaction chlorophyllide a + oxidized 2[4Fe-4S]-[ferredoxin] + 2 ADP + 2 phosphate = protochlorophyllide a + reduced 2[4Fe-4S]-[ferredoxin] + 2 ATP + 2 H2O. It participates in porphyrin-containing compound metabolism; bacteriochlorophyll biosynthesis (light-independent). Functionally, component of the dark-operative protochlorophyllide reductase (DPOR) that uses Mg-ATP and reduced ferredoxin to reduce ring D of protochlorophyllide (Pchlide) to form chlorophyllide a (Chlide). This reaction is light-independent. The NB-protein (BchN-BchB) is the catalytic component of the complex. The chain is Light-independent protochlorophyllide reductase subunit N from Rhodospirillum rubrum (strain ATCC 11170 / ATH 1.1.1 / DSM 467 / LMG 4362 / NCIMB 8255 / S1).